A 347-amino-acid polypeptide reads, in one-letter code: 2-hydroxyacid dehydrogenase A (347 aa).

Residues 157-158 (RI), D177, 234-236 (TSR), and D260 each bind NAD(+). Residue R236 is part of the active site. E265 is a catalytic residue.

It belongs to the D-isomer specific 2-hydroxyacid dehydrogenase family.

It catalyses the reaction a (2R)-2-hydroxycarboxylate + NADP(+) = a 2-oxocarboxylate + NADPH + H(+). Its function is as follows. 2-hydroxyacid dehydrogenase that is capable to reduce pyruvate, hydroxypyruvate and glyoxylate in a NADPH- or NADH-dependent manner. In contrast to 2-HadhD/morA, does not recognize 4-methyl-2-oxopentanoate (MOA) as a substrate. The sequence is that of 2-hydroxyacid dehydrogenase A from Aspergillus oryzae (strain ATCC 42149 / RIB 40) (Yellow koji mold).